A 183-amino-acid chain; its full sequence is uncharacterized protein (183 aa).

An N-terminal signal peptide occupies residues 1–23 (MSAFKKSLLVAGVAMILSNNVFA). C41 and C80 are oxidised to a cystine.

This sequence belongs to the fimbrial protein family.

The protein resides in the fimbrium. This is an uncharacterized protein from Escherichia coli (strain K12).